The sequence spans 281 residues: Spermatogenesis-associated serine-rich protein 1 (281 aa).

Residues 1–14 are compositionally biased toward basic and acidic residues; sequence MEAARDAQHSDVLE. The segment at 1-92 is disordered; it reads MEAARDAQHS…SSSAQANRSL (92 aa). Over residues 21–37 the composition is skewed to polar residues; that stretch reads SRTSSHQNRRASLSSDG. The residue at position 53 (Thr-53) is a Phosphothreonine. Polar residues predominate over residues 54-65; it reads PSDTASGLGQKT. Low complexity predominate over residues 66 to 85; it reads SSTSSSSSSSSSSSPSSSSS. Phosphoserine occurs at positions 71, 74, 77, 78, 79, and 91.

As to expression, detected in pachytene spermatocytes and round spermatids.

This is Spermatogenesis-associated serine-rich protein 1 (Spats1) from Rattus norvegicus (Rat).